Consider the following 534-residue polypeptide: (R)-citramalate synthase (534 aa).

The region spanning 11–274 is the Pyruvate carboxyltransferase domain; that stretch reads FHVFDTTLRD…KQVLPEGRLR (264 aa).

This sequence belongs to the alpha-IPM synthase/homocitrate synthase family.

The enzyme catalyses pyruvate + acetyl-CoA + H2O = (3R)-citramalate + CoA + H(+). It functions in the pathway amino-acid biosynthesis; L-isoleucine biosynthesis; 2-oxobutanoate from pyruvate: step 1/3. Catalyzes the condensation of pyruvate and acetyl-coenzyme A to form (R)-citramalate. In Streptomyces coelicolor (strain ATCC BAA-471 / A3(2) / M145), this protein is (R)-citramalate synthase.